Consider the following 350-residue polypeptide: S-adenosylmethionine:tRNA ribosyltransferase-isomerase (350 aa).

The protein belongs to the QueA family. As to quaternary structure, monomer.

The protein resides in the cytoplasm. It catalyses the reaction 7-aminomethyl-7-carbaguanosine(34) in tRNA + S-adenosyl-L-methionine = epoxyqueuosine(34) in tRNA + adenine + L-methionine + 2 H(+). It participates in tRNA modification; tRNA-queuosine biosynthesis. Functionally, transfers and isomerizes the ribose moiety from AdoMet to the 7-aminomethyl group of 7-deazaguanine (preQ1-tRNA) to give epoxyqueuosine (oQ-tRNA). The sequence is that of S-adenosylmethionine:tRNA ribosyltransferase-isomerase from Bacillus cereus (strain B4264).